The following is a 378-amino-acid chain: MSILKEAYLYFANGLFFKAQSFGSDGTFVGEVVFNTSMSGYQEVITDPSYSGQFIVFSMPEIGIVGVNNQDSESPRAACTGVILSSYNDFVSNFRSEQSLSTYLKEHNIMGICGVDTRNLIKMLTTQGAMMMIASTQITQESELKASLSRTPPIQDINFIKEVSTKTSYVHTDSTFDFTHFAYGTSPNFKAKVVAIDFGAKRNILNELVAVGLEVEVIPHSFSAAEILSRFKAGEIQGVFLSNGPGDPLVLHNEIEQIKQLIQSDIPIFGICLGHQLLSIAHGFPTYKLKFGHHGSNHPIKNLQSGAVEITAQNHNYCVPESIAQIATITHRNLFDNTIEGVRYKDKPIFSVQHHPEASPGPREARILFEEFAKLCCK.

The CPSase stretch occupies residues 1–188 (MSILKEAYLY…THFAYGTSPN (188 aa)). Serine 49, glycine 244, and glycine 246 together coordinate L-glutamine. The region spanning 192–378 (KVVAIDFGAK…FEEFAKLCCK (187 aa)) is the Glutamine amidotransferase type-1 domain. Cysteine 272 (nucleophile) is an active-site residue. 4 residues coordinate L-glutamine: leucine 273, glutamine 276, asparagine 314, and tyrosine 317. Catalysis depends on residues histidine 355 and glutamate 357.

It belongs to the CarA family. As to quaternary structure, composed of two chains; the small (or glutamine) chain promotes the hydrolysis of glutamine to ammonia, which is used by the large (or ammonia) chain to synthesize carbamoyl phosphate. Tetramer of heterodimers (alpha,beta)4.

It carries out the reaction hydrogencarbonate + L-glutamine + 2 ATP + H2O = carbamoyl phosphate + L-glutamate + 2 ADP + phosphate + 2 H(+). The enzyme catalyses L-glutamine + H2O = L-glutamate + NH4(+). It functions in the pathway amino-acid biosynthesis; L-arginine biosynthesis; carbamoyl phosphate from bicarbonate: step 1/1. It participates in pyrimidine metabolism; UMP biosynthesis via de novo pathway; (S)-dihydroorotate from bicarbonate: step 1/3. In terms of biological role, small subunit of the glutamine-dependent carbamoyl phosphate synthetase (CPSase). CPSase catalyzes the formation of carbamoyl phosphate from the ammonia moiety of glutamine, carbonate, and phosphate donated by ATP, constituting the first step of 2 biosynthetic pathways, one leading to arginine and/or urea and the other to pyrimidine nucleotides. The small subunit (glutamine amidotransferase) binds and cleaves glutamine to supply the large subunit with the substrate ammonia. This is Carbamoyl phosphate synthase small chain from Helicobacter hepaticus (strain ATCC 51449 / 3B1).